The primary structure comprises 542 residues: DM7 family protein CG15333 (542 aa).

It belongs to the DM7 family.

This is DM7 family protein CG15333 from Drosophila melanogaster (Fruit fly).